The following is a 121-amino-acid chain: Large ribosomal subunit protein bL12 (121 aa).

The protein belongs to the bacterial ribosomal protein bL12 family. In terms of assembly, homodimer. Part of the ribosomal stalk of the 50S ribosomal subunit. Forms a multimeric L10(L12)X complex, where L10 forms an elongated spine to which 2 to 4 L12 dimers bind in a sequential fashion. Binds GTP-bound translation factors.

Its function is as follows. Forms part of the ribosomal stalk which helps the ribosome interact with GTP-bound translation factors. Is thus essential for accurate translation. This chain is Large ribosomal subunit protein bL12, found in Pseudomonas fluorescens (strain Pf0-1).